A 114-amino-acid polypeptide reads, in one-letter code: Ribonuclease P protein component (114 aa).

It belongs to the RnpA family. In terms of assembly, consists of a catalytic RNA component (M1 or rnpB) and a protein subunit.

It catalyses the reaction Endonucleolytic cleavage of RNA, removing 5'-extranucleotides from tRNA precursor.. Functionally, RNaseP catalyzes the removal of the 5'-leader sequence from pre-tRNA to produce the mature 5'-terminus. It can also cleave other RNA substrates such as 4.5S RNA. The protein component plays an auxiliary but essential role in vivo by binding to the 5'-leader sequence and broadening the substrate specificity of the ribozyme. The chain is Ribonuclease P protein component from Limosilactobacillus fermentum (strain NBRC 3956 / LMG 18251) (Lactobacillus fermentum).